The sequence spans 510 residues: D-alanine--D-alanyl carrier protein ligase (510 aa).

Position 157 to 158 (157 to 158 (TS)) interacts with ATP. Asp-202 lines the D-alanine pocket. 297 to 302 (NTYGPT) is a binding site for ATP. Val-306 serves as a coordination point for D-alanine. ATP-binding residues include Asp-389 and Lys-498. Lys-498 contacts D-alanine.

The protein belongs to the ATP-dependent AMP-binding enzyme family. DltA subfamily.

Its subcellular location is the cytoplasm. It catalyses the reaction holo-[D-alanyl-carrier protein] + D-alanine + ATP = D-alanyl-[D-alanyl-carrier protein] + AMP + diphosphate. It functions in the pathway cell wall biogenesis; lipoteichoic acid biosynthesis. In terms of biological role, catalyzes the first step in the D-alanylation of lipoteichoic acid (LTA), the activation of D-alanine and its transfer onto the D-alanyl carrier protein (Dcp) DltC. In an ATP-dependent two-step reaction, forms a high energy D-alanyl-AMP intermediate, followed by transfer of the D-alanyl residue as a thiol ester to the phosphopantheinyl prosthetic group of the Dcp. D-alanylation of LTA plays an important role in modulating the properties of the cell wall in Gram-positive bacteria, influencing the net charge of the cell wall. The chain is D-alanine--D-alanyl carrier protein ligase from Listeria monocytogenes serotype 4a (strain HCC23).